The following is a 420-amino-acid chain: Phosphoglycerate kinase (420 aa).

(2R)-3-phosphoglycerate is bound by residues Val-26, Asp-27, Tyr-28, Asn-29, Gln-42, Arg-43, Ser-66, His-67, Gly-69, Arg-70, Leu-125, Arg-126, His-173, and Arg-174. Tyr-199 carries the post-translational modification Phosphotyrosine. Position 206 is a phosphoserine (Ser-206). The calmodulin binding stretch occupies residues 209-228; that stretch reads KPFLAILGGAKVSDKIKLIE. Gly-217 lines the ADP pocket. Gly-217 is a binding site for CDP. Ala-218 and Lys-219 together coordinate AMP. Residue Ala-218 participates in ATP binding. Residue Ala-218 coordinates Mg(2+). Asp-222 contacts CDP. A Mg(2+)-binding site is contributed by Asp-222. AMP is bound at residue Lys-223. Residue Lys-223 participates in ATP binding. Gly-241 is a binding site for ADP. Gly-241 contributes to the CDP binding site. Positions 242 and 316 each coordinate AMP. ATP contacts are provided by Gly-242 and Gly-316. CDP contacts are provided by Gly-341 and Phe-346. An ADP-binding site is contributed by Phe-346. An AMP-binding site is contributed by Glu-347. The ATP site is built by Glu-347, Asp-378, and Thr-379. Asp-378 is a Mg(2+) binding site. Phosphoserine is present on Ser-393.

This sequence belongs to the phosphoglycerate kinase family. Monomer. Interacts with calmodulin in the presence of Ca(2+). The cofactor is Mg(2+).

The protein localises to the cytoplasm. It carries out the reaction (2R)-3-phosphoglycerate + ATP = (2R)-3-phospho-glyceroyl phosphate + ADP. It participates in carbohydrate degradation; glycolysis; pyruvate from D-glyceraldehyde 3-phosphate: step 2/5. The chain is Phosphoglycerate kinase from Dictyostelium discoideum (Social amoeba).